The primary structure comprises 593 residues: Glutamate decarboxylase 1 (593 aa).

The span at methionine 1–serine 12 shows a compositional bias: low complexity. The interval methionine 1 to asparagine 22 is disordered. Residue serine 77 is modified to Phosphoserine. A 4-aminobutanoate-binding site is contributed by glutamine 189–serine 191. N6-(pyridoxal phosphate)lysine is present on lysine 404. Residue arginine 566 coordinates 4-aminobutanoate.

This sequence belongs to the group II decarboxylase family. As to quaternary structure, homodimer. Requires pyridoxal 5'-phosphate as cofactor.

It catalyses the reaction L-glutamate + H(+) = 4-aminobutanoate + CO2. Its function is as follows. Catalyzes the synthesis of the inhibitory neurotransmitter gamma-aminobutyric acid (GABA) with pyridoxal 5'-phosphate as cofactor. This is Glutamate decarboxylase 1 (Gad1) from Mus musculus (Mouse).